The following is an 85-amino-acid chain: Conotoxin MaIr94 (85 aa).

An N-terminal signal peptide occupies residues M1–A22. A propeptide spanning residues G23–A49 is cleaved from the precursor. 3 disulfides stabilise this stretch: C52–C69, C59–C73, and C68–C84.

The protein belongs to the conotoxin O1 superfamily. As to expression, expressed by the venom duct.

It is found in the secreted. Its function is as follows. Produces no obvious effect on ionic currents when tested on the mouse dorsal rooted ganglia (DRG). This Conus marmoreus (Marble cone) protein is Conotoxin MaIr94.